A 517-amino-acid polypeptide reads, in one-letter code: Cytochrome P450 monooxygenase cdmJ (517 aa).

A helical transmembrane segment spans residues 15–35 (YMWSLTLFALCLSAILMFPFL). Asparagine 404 is a glycosylation site (N-linked (GlcNAc...) asparagine). Residue cysteine 451 coordinates heme.

It belongs to the cytochrome P450 family. The cofactor is heme.

The protein localises to the membrane. It carries out the reaction 3-hydroxypentacecilide A + NADPH + O2 + H(+) = chrodrimanin F + NADP(+) + H2O. It catalyses the reaction chrodrimanin C + NADPH + O2 + H(+) = chrodrimanin H + NADP(+) + H2O. The enzyme catalyses verruculide A + NADPH + O2 + H(+) = chrodrimanin E + NADP(+) + H2O. The catalysed reaction is chrodrimanin T + NADPH + O2 + H(+) = chrodrimanin A + NADP(+) + H2O. Its pathway is secondary metabolite biosynthesis; terpenoid biosynthesis. Its function is as follows. Cytochrome P450 monooxygenase; part of the gene cluster that mediates the biosynthesis of chrodrimanin B, a meroterpenoid that acts as a potent blocker of insect GABA-gated chloride channels. The first step of the pathway is the biosynthesis of 6-hydroxymellein by the polyketide synthase cdmE. The prenyltransferase cdmH acts as a 6-hydroxymellein 5-farnesyltransferase and produces the hydrophobic metabolite verruculide C. The FAD-dependent monooxygenase cdmI further converts verruculide C into verruculide B. The terpene cyclase cdmG then produced the pentacyclic molecule 3-hydroxypentacecilide A, the backbone structure of chrodrimanin B, via folding the farnesyl moiety of the substrate into the chair-boat conformation. The short-chain dehydrogenase/reductase cdmF functions as the 3-OH dehydrogenase that oxidizes the C-3 hydroxyl group of 3-hydroxypentacecilide A and produces chrodrimanin C, the dehydrogenated product of 3-hydroxypentacecilide A. The cytochrome P450 monooxygenase cdmJ then accepts both 3-hydroxypentacecilide A and chrodrimanin C and functions as a C-7-beta-hydroxylase to produce respectively chrodrimanin H and chrodrimanin F. The dioxygenase cdmA accepts chrodrimanin H to afford chrodrimanin E, which is further transformed to chrodrimanin A by the dioxygenase cdmD. CdmA can also accept chrodrimanin C as substrate to convert it into verruculide A, which is further converted into chrodrimanin T by cdmD. The last step of the biosynthesis is proposed to be performed by the acetyltransferase cdmC which acetylates chrodrimanin A to yield chrodrimanin B. The pathway may also lead to the production of additional shunt products, including chrodrimanins T and U. The polypeptide is Cytochrome P450 monooxygenase cdmJ (Talaromyces verruculosus (Penicillium verruculosum)).